Here is a 460-residue protein sequence, read N- to C-terminus: Diguanylate cyclase DosC (460 aa).

His98 contacts heme. The 134-residue stretch at 325 to 458 (TPLSVLIIDV…GRNRVELWKA (134 aa)) folds into the GGDEF domain. Asp333 is a binding site for Mg(2+). The substrate site is built by Asn341 and Asp350. Position 376 (Asp376) interacts with Mg(2+). The active-site Proton acceptor is Asp376.

Heme is required as a cofactor. The cofactor is Mg(2+).

The enzyme catalyses 2 GTP = 3',3'-c-di-GMP + 2 diphosphate. The protein operates within purine metabolism; 3',5'-cyclic di-GMP biosynthesis. Its function is as follows. Globin-coupled heme-based oxygen sensor protein displaying diguanylate cyclase (DGC) activity in response to oxygen availability. Thus, catalyzes the synthesis of cyclic diguanylate (c-di-GMP) via the condensation of 2 GTP molecules. Cyclic-di-GMP is a second messenger which controls cell surface-associated traits in bacteria. This chain is Diguanylate cyclase DosC (dosC), found in Shigella sonnei (strain Ss046).